Reading from the N-terminus, the 152-residue chain is D-aminoacyl-tRNA deacylase (152 aa).

The short motif at 142–143 (GP) is the Gly-cisPro motif, important for rejection of L-amino acids element.

The protein belongs to the DTD family. As to quaternary structure, homodimer.

The protein resides in the cytoplasm. It catalyses the reaction glycyl-tRNA(Ala) + H2O = tRNA(Ala) + glycine + H(+). The enzyme catalyses a D-aminoacyl-tRNA + H2O = a tRNA + a D-alpha-amino acid + H(+). Its function is as follows. An aminoacyl-tRNA editing enzyme that deacylates mischarged D-aminoacyl-tRNAs. Also deacylates mischarged glycyl-tRNA(Ala), protecting cells against glycine mischarging by AlaRS. Acts via tRNA-based rather than protein-based catalysis; rejects L-amino acids rather than detecting D-amino acids in the active site. By recycling D-aminoacyl-tRNA to D-amino acids and free tRNA molecules, this enzyme counteracts the toxicity associated with the formation of D-aminoacyl-tRNA entities in vivo and helps enforce protein L-homochirality. In Burkholderia vietnamiensis (strain G4 / LMG 22486) (Burkholderia cepacia (strain R1808)), this protein is D-aminoacyl-tRNA deacylase.